The chain runs to 1627 residues: Type III effector DspE (1627 aa).

Polar residues-rich tracts occupy residues 22 to 44 (AKTSLSQGNSTSASQKGAQSLIQ) and 59 to 74 (GNGSSVRSQDSRSTTL). 2 disordered regions span residues 22-102 (AKTS…GPIQ) and 436-464 (QTQALATDRQGQKHVAPLGQNGLSPTPGW). 3 short sequence motifs (wxxxE) span residues 464–468 (WNLSD), 514–520 (WEASSVE), and 660–667 (WQNAANHD).

It belongs to the AvrE family.

It localises to the secreted. Its subcellular location is the host cell. In terms of biological role, major virulence factor that may function as a water- and solute-permeable channel dedicated to creating osmotic/water potential perturbation and a water- and nutrient-rich apoplast in which bacteria multiply within the infected plant tissues. Its function is as follows. Required for plant cell death in N.benthamiana leaves and leaf cell death in S.tuberosum. Essential for pathogenicity. Does not suppress callose formation. This Pectobacterium carotovorum (Erwinia carotovora) protein is Type III effector DspE.